Reading from the N-terminus, the 109-residue chain is Nucleoid-associated protein CKO_02678 (109 aa).

The tract at residues 89 to 109 (KEKMASVSSGMQLPPGFKMPF) is disordered.

This sequence belongs to the YbaB/EbfC family. Homodimer.

The protein localises to the cytoplasm. It localises to the nucleoid. Functionally, binds to DNA and alters its conformation. May be involved in regulation of gene expression, nucleoid organization and DNA protection. The protein is Nucleoid-associated protein CKO_02678 of Citrobacter koseri (strain ATCC BAA-895 / CDC 4225-83 / SGSC4696).